The primary structure comprises 362 residues: Fructose-bisphosphate aldolase (362 aa).

Asp-33 contacts dihydroxyacetone phosphate. D-glyceraldehyde 3-phosphate-binding residues include Ser-35 and Thr-38. Arg-42 provides a ligand contact to beta-D-fructose 1,6-bisphosphate. Lys-106 is a binding site for D-glyceraldehyde 3-phosphate. Dihydroxyacetone phosphate is bound at residue Lys-145. Residue Glu-188 participates in D-glyceraldehyde 3-phosphate binding. The Proton acceptor role is filled by Glu-188. Residues Lys-230, Ser-272, and Gly-273 each coordinate dihydroxyacetone phosphate. Lys-230 functions as the Schiff-base intermediate with dihydroxyacetone phosphate in the catalytic mechanism. Beta-D-fructose 1,6-bisphosphate contacts are provided by residues 272 to 274 (SGG) and Ser-300. Positions 302 and 303 each coordinate dihydroxyacetone phosphate. Arg-303 provides a ligand contact to beta-D-fructose 1,6-bisphosphate.

It belongs to the class I fructose-bisphosphate aldolase family. In terms of assembly, homotetramer. Interacts with TRAP (via cytoplasmic domain); the interaction prevents substrate binding and thereby inhibits aldolase activity. Interacts with MTRAP (via cytoplasmic domain); MTRAP phosphorylation may increase the binding to FBPA. Interact with RH1 (via cytoplasmic domain). Interacts with RH2b (via cytoplasmic domain). Interacts with RH4 (via cytoplasmic domain). Interacts with AMA1 (via cytoplasmic domain); the interaction is weak, however it may be increased upon AMA1 phosphorylation. Interacts with EBA140 (via cytoplasmic domain); the interaction is weak. Interacts with EBA175 (via cytoplasmic domain); the interaction is weak. Interacts with EBA181 (via cytoplasmic domain); the interaction is weak. Interacts with G-actin and F-actin. May interact with ACT2/actin II; the interaction inhibits FBPA catalytic activity. Interacts with human SLC4A1/band 3 (via N-terminus); the interaction inhibits FBPA catalytic activity.

Its subcellular location is the cytoplasm. It is found in the membrane. The protein localises to the host cell membrane. It catalyses the reaction beta-D-fructose 1,6-bisphosphate = D-glyceraldehyde 3-phosphate + dihydroxyacetone phosphate. It functions in the pathway carbohydrate degradation; glycolysis; D-glyceraldehyde 3-phosphate and glycerone phosphate from D-glucose: step 4/4. Its activity is regulated as follows. The cytoplasmic tail of TRAP and probably other adhesins acts as a competitive inhibitor as the binding sites of the glycolytic substrate fructose 1,6-bisphosphate and TRAP partially overlap. Inhibited by suramin, an antiparasitic drug used to treat Trypanosome-mediated infection. Its function is as follows. Plays a key role in glycolysis by catalyzing the cleavage of fructose 1,6-bisphosphate into dihydroxyacetone phosphate and glyceraldehyde 3-phosphate. Independently of its catalytic activity, connects the actin filaments, and thus the actomyosin motor, to cell surface adhesins of the thrombospondin-related anonymous protein (TRAP), the erythrocyte binding ligand (EBL) and reticulocyte binding homolog (RH) protein families; this interaction is probably involved in transducing the motor force across the parasite surface required for sporozoite and ookinete gliding motility and merozoite invasion. Stimulates actin polymerisation. This is Fructose-bisphosphate aldolase from Plasmodium falciparum (isolate K1 / Thailand).